The following is a 516-amino-acid chain: MAERTSESSSESASFDLEKQQSNHHDRYQSSVSSELEESLKKYPVISNPQDFIVTLDGPDDPDLAVNWPLAKKLRNVAVMGSACLCAGFGSSIFSGAVPEVMVKFHVCRTVALLGISLYVLGFASGPVVWAPMCELFGRRRPMIIAVFIFCIFHIAVATAKDIQTVMICRFFCGFFGSSPITTVAGSFSDMFSARTRGLVIAVYSAIIFNGPLMSPIVGGFIGKSYLGWRWTSYITAIMGFTAFTSMIIFHRETYTRTITEIRASKVRVLTGNYCLHAKSEEEPLEFSYFFHKYFTFPLRLLIFEPILLVVSTYTAFVYGILYGLLEAYPVIFGESRKWRLGVESLPYLAIFVGVCIGCSSVALFQPYYFKKMDENKGRPVPEARLPSMMIGCIVFPIGIFWLAWTGNYPWIHWIVPTLAGSFIGFGIITIFQQTINYIIDCYSGCSASAIAANTLLRSSFGAAFPLFTTQMFNNLGIGWAGSLVGFVAVGLIPVPFMLFLYGPKLRQMSKHCLKD.

A disordered region spans residues 1-35 (MAERTSESSSESASFDLEKQQSNHHDRYQSSVSSE). The span at 16–28 (DLEKQQSNHHDRY) shows a compositional bias: basic and acidic residues. Ser-31 bears the Phosphoserine mark. The next 12 helical transmembrane spans lie at 77–97 (VAVMGSACLCAGFGSSIFSGA), 111–131 (VALLGISLYVLGFASGPVVWA), 143–163 (MIIAVFIFCIFHIAVATAKDI), 166–186 (VMICRFFCGFFGSSPITTVAG), 198–218 (GLVIAVYSAIIFNGPLMSPIV), 231–251 (WTSYITAIMGFTAFTSMIIFH), 301–321 (LLIFEPILLVVSTYTAFVYGI), 345–365 (SLPYLAIFVGVCIGCSSVALF), 386–406 (LPSMMIGCIVFPIGIFWLAWT), 412–432 (IHWIVPTLAGSFIGFGIITIF), 439–461 (IIDCYSGCSASAIAANTLLRSSF), and 481–501 (AGSLVGFVAVGLIPVPFMLFL).

It belongs to the major facilitator superfamily.

It is found in the membrane. This is an uncharacterized protein from Schizosaccharomyces pombe (strain 972 / ATCC 24843) (Fission yeast).